Here is a 267-residue protein sequence, read N- to C-terminus: Tryptophan synthase alpha chain (267 aa).

Active-site proton acceptor residues include Glu49 and Asp60.

It belongs to the TrpA family. Tetramer of two alpha and two beta chains.

It carries out the reaction (1S,2R)-1-C-(indol-3-yl)glycerol 3-phosphate + L-serine = D-glyceraldehyde 3-phosphate + L-tryptophan + H2O. It participates in amino-acid biosynthesis; L-tryptophan biosynthesis; L-tryptophan from chorismate: step 5/5. The alpha subunit is responsible for the aldol cleavage of indoleglycerol phosphate to indole and glyceraldehyde 3-phosphate. This is Tryptophan synthase alpha chain from Carboxydothermus hydrogenoformans (strain ATCC BAA-161 / DSM 6008 / Z-2901).